Here is a 321-residue protein sequence, read N- to C-terminus: Auxin-responsive protein IAA8 (321 aa).

Residues 54–58 carry the EAR-like (transcriptional repression) motif; that stretch reads LRLGL. The PB1 domain maps to 199–301; sequence VLFVKVSMDG…TCQKLKIMKG (103 aa).

It belongs to the Aux/IAA family. As to quaternary structure, homodimers and heterodimers. Interacts with TPL. Highly expressed in the whole plant.

The protein resides in the nucleus. In terms of biological role, aux/IAA proteins are short-lived transcriptional factors that function as repressors of early auxin response genes at low auxin concentrations. Repression is thought to result from the interaction with auxin response factors (ARFs), proteins that bind to the auxin-responsive promoter element (AuxRE). Formation of heterodimers with ARF proteins may alter their ability to modulate early auxin response genes expression. This Arabidopsis thaliana (Mouse-ear cress) protein is Auxin-responsive protein IAA8 (IAA8).